Reading from the N-terminus, the 700-residue chain is Elongation factor G (700 aa).

One can recognise a tr-type G domain in the interval 8 to 290; sequence ERYRNIGISA…AVVEYLPSPV (283 aa). GTP contacts are provided by residues 17–24, 88–92, and 142–145; these read AHIDAGKT, DTPGH, and NKMD.

The protein belongs to the TRAFAC class translation factor GTPase superfamily. Classic translation factor GTPase family. EF-G/EF-2 subfamily.

The protein localises to the cytoplasm. Catalyzes the GTP-dependent ribosomal translocation step during translation elongation. During this step, the ribosome changes from the pre-translocational (PRE) to the post-translocational (POST) state as the newly formed A-site-bound peptidyl-tRNA and P-site-bound deacylated tRNA move to the P and E sites, respectively. Catalyzes the coordinated movement of the two tRNA molecules, the mRNA and conformational changes in the ribosome. The chain is Elongation factor G from Mannheimia succiniciproducens (strain KCTC 0769BP / MBEL55E).